Here is a 486-residue protein sequence, read N- to C-terminus: Cytosol aminopeptidase (486 aa).

Zn(2+)-binding residues include K249 and D254. K261 is an active-site residue. Residues D272, D331, and E333 each coordinate Zn(2+). The active site involves R335.

The protein belongs to the peptidase M17 family. As to quaternary structure, homohexamer. The cofactor is Zn(2+).

The protein resides in the cytoplasm. It carries out the reaction Release of an N-terminal amino acid, Xaa-|-Yaa-, in which Xaa is preferably Leu, but may be other amino acids including Pro although not Arg or Lys, and Yaa may be Pro. Amino acid amides and methyl esters are also readily hydrolyzed, but rates on arylamides are exceedingly low.. The enzyme catalyses Release of N-terminal proline from a peptide.. Presumably involved in the processing and regular turnover of intracellular proteins. Catalyzes the removal of unsubstituted N-terminal amino acids from various peptides. This is Cytosol aminopeptidase from Encephalitozoon cuniculi (strain GB-M1) (Microsporidian parasite).